Reading from the N-terminus, the 505-residue chain is Glycerol kinase (505 aa).

Threonine 14 is an ADP binding site. ATP-binding residues include threonine 14, threonine 15, and serine 16. Threonine 14 serves as a coordination point for sn-glycerol 3-phosphate. ADP is bound at residue arginine 18. Sn-glycerol 3-phosphate-binding residues include arginine 84, glutamate 85, tyrosine 136, and aspartate 246. Glycerol-binding residues include arginine 84, glutamate 85, tyrosine 136, aspartate 246, and glutamine 247. ADP is bound by residues threonine 268 and glycine 311. Residues threonine 268, glycine 311, glutamine 315, and glycine 412 each coordinate ATP. Residues glycine 412 and asparagine 416 each coordinate ADP.

It belongs to the FGGY kinase family.

It carries out the reaction glycerol + ATP = sn-glycerol 3-phosphate + ADP + H(+). It functions in the pathway polyol metabolism; glycerol degradation via glycerol kinase pathway; sn-glycerol 3-phosphate from glycerol: step 1/1. With respect to regulation, inhibited by fructose 1,6-bisphosphate (FBP). Functionally, key enzyme in the regulation of glycerol uptake and metabolism. Catalyzes the phosphorylation of glycerol to yield sn-glycerol 3-phosphate. The polypeptide is Glycerol kinase (Vibrio campbellii (strain ATCC BAA-1116)).